We begin with the raw amino-acid sequence, 216 residues long: Glycerol-3-phosphate acyltransferase (216 aa).

Transmembrane regions (helical) follow at residues 4–24, 71–91, 113–133, 144–164, and 165–185; these read TIIG…LWIG, LPFF…LAVI, VVLG…ASIL, VLSA…GFIL, and PSYD…IILR.

Belongs to the PlsY family. Probably interacts with PlsX.

It is found in the cell membrane. The enzyme catalyses an acyl phosphate + sn-glycerol 3-phosphate = a 1-acyl-sn-glycero-3-phosphate + phosphate. It functions in the pathway lipid metabolism; phospholipid metabolism. Functionally, catalyzes the transfer of an acyl group from acyl-phosphate (acyl-PO(4)) to glycerol-3-phosphate (G3P) to form lysophosphatidic acid (LPA). This enzyme utilizes acyl-phosphate as fatty acyl donor, but not acyl-CoA or acyl-ACP. In Streptococcus sanguinis (strain SK36), this protein is Glycerol-3-phosphate acyltransferase.